The primary structure comprises 203 residues: Nascent polypeptide-associated complex subunit alpha-like protein 1 (203 aa).

Basic and acidic residues predominate over residues 1–23 (MTTEEKEILAAKLEEQKIDLDKP). A disordered region spans residues 1-71 (MTTEEKEILA…SEKKSRKAML (71 aa)). The segment covering 24–50 (EVEDDDDNEDDDSDDDDKDDDEADGLD) has biased composition (acidic residues). The residue at position 36 (serine 36) is a Phosphoserine. The NAC-A/B domain occupies 60-125 (SRSEKKSRKA…AKIEDLSSQI (66 aa)). Residues 158 to 203 (EVDEEGVEPKDIELVMTQAGVSRPNAVKALKAADGDIVSAIMELTT) form the UBA domain.

It belongs to the NAC-alpha family.

May promote appropriate targeting of ribosome-nascent polypeptide complexes. The polypeptide is Nascent polypeptide-associated complex subunit alpha-like protein 1 (Arabidopsis thaliana (Mouse-ear cress)).